A 608-amino-acid chain; its full sequence is 1-deoxy-D-xylulose-5-phosphate synthase (608 aa).

Residues His-66 and 107–109 (GHA) contribute to the thiamine diphosphate site. Asp-138 lines the Mg(2+) pocket. Residues 139-140 (GA), Asn-167, Phe-277, and Glu-350 each bind thiamine diphosphate. Residue Asn-167 coordinates Mg(2+).

The protein belongs to the transketolase family. DXPS subfamily. In terms of assembly, homodimer. Mg(2+) serves as cofactor. Thiamine diphosphate is required as a cofactor.

The catalysed reaction is D-glyceraldehyde 3-phosphate + pyruvate + H(+) = 1-deoxy-D-xylulose 5-phosphate + CO2. The protein operates within metabolic intermediate biosynthesis; 1-deoxy-D-xylulose 5-phosphate biosynthesis; 1-deoxy-D-xylulose 5-phosphate from D-glyceraldehyde 3-phosphate and pyruvate: step 1/1. Its function is as follows. Catalyzes the acyloin condensation reaction between C atoms 2 and 3 of pyruvate and glyceraldehyde 3-phosphate to yield 1-deoxy-D-xylulose-5-phosphate (DXP). The protein is 1-deoxy-D-xylulose-5-phosphate synthase of Thermotoga maritima (strain ATCC 43589 / DSM 3109 / JCM 10099 / NBRC 100826 / MSB8).